A 995-amino-acid polypeptide reads, in one-letter code: Secreted protein CSS1 (995 aa).

The first 23 residues, 1 to 23, serve as a signal peptide directing secretion; it reads MFNRLNKFQAALALALYSQSALG. Residues 26 to 253 form the Methyl-accepting transducer domain; sequence YSNSTSISSN…GVSSSGSQSV (228 aa). 2 N-linked (GlcNAc...) asparagine glycosylation sites follow: Asn28 and Asn35. The interval 98–276 is disordered; the sequence is SSSSVSDVSS…TSSASTASGS (179 aa). Asn468 and Asn664 each carry an N-linked (GlcNAc...) asparagine glycan.

It belongs to the SRP1/TIP1 family.

Its subcellular location is the secreted. Its function is as follows. Secreted protein that may be involved in cell wall organization and biosynthesis. This chain is Secreted protein CSS1, found in Saccharomyces cerevisiae (strain ATCC 204508 / S288c) (Baker's yeast).